Consider the following 280-residue polypeptide: Probable formate transporter (280 aa).

A run of 6 helical transmembrane segments spans residues 33 to 49 (LSFV…LLAE), 67 to 83 (LVFG…VVIA), 116 to 133 (SWVF…VLAY), 177 to 195 (FWRA…YLAV), 204 to 219 (SFGI…CIGF), and 253 to 272 (LGNI…FTYL).

Belongs to the FNT transporter (TC 1.A.16) family.

It localises to the cell membrane. Its function is as follows. May act as a formate transporter. The sequence is that of Probable formate transporter (fdhC) from Methanobacterium formicicum.